The primary structure comprises 59 residues: Potassium channel toxin alpha-KTx 15.5 (59 aa).

Positions 1-22 are cleaved as a signal peptide; that stretch reads MKFSSIILLTLLICSMSIFGNC. Glutamine 23 bears the Pyrrolidone carboxylic acid mark. Intrachain disulfides connect cysteine 30-cysteine 50, cysteine 35-cysteine 55, and cysteine 39-cysteine 57.

The protein belongs to the short scorpion toxin superfamily. Potassium channel inhibitor family. Alpha-KTx 15 subfamily. Expressed by the venom gland.

Its subcellular location is the secreted. In terms of biological role, blocker of A-type voltage-gated potassium channels of cerebellar granular cells. May also inhibit Kv4/KCND when coexpressed with DPP6 or DPP10. The occlusion of the outer entry of the K(+) conducting pore is partially reversible and affects both open and closed channels. It shares the same target in rat brain than BmTX3 (AC Q8I0L5) and AmmTX3 (AC P60208). This is Potassium channel toxin alpha-KTx 15.5 from Androctonus australis (Sahara scorpion).